A 251-amino-acid chain; its full sequence is Extracellular superoxide dismutase [Cu-Zn] (251 aa).

The N-terminal stretch at 1-15 is a signal peptide; that stretch reads MLAFLFYGLLLAACG. Residues 16-24 constitute a propeptide that is removed on maturation; sequence SVTMSNPGE. Intrachain disulfides connect Cys77–Cys222 and Cys139–Cys221. N-linked (GlcNAc...) asparagine glycosylation is present at Asn121. Cu cation-binding residues include His128, His130, and His145. Residues His145, His153, His156, and Asp159 each coordinate Zn(2+). Cu cation is bound at residue His195. The tract at residues 230–251 is disordered; it reads AAWESQTKERKKRRRESECKTT.

This sequence belongs to the Cu-Zn superoxide dismutase family. Homotetramer. Directly interacts with ATP7A/MNK; this interaction is copper-dependent and is required for SOD3 activity. Cu cation is required as a cofactor. It depends on Zn(2+) as a cofactor.

Its subcellular location is the secreted. The protein resides in the extracellular space. It localises to the golgi apparatus. It is found in the trans-Golgi network. It catalyses the reaction 2 superoxide + 2 H(+) = H2O2 + O2. Protect the extracellular space from toxic effect of reactive oxygen intermediates by converting superoxide radicals into hydrogen peroxide and oxygen. The protein is Extracellular superoxide dismutase [Cu-Zn] (Sod3) of Mus musculus (Mouse).